Reading from the N-terminus, the 255-residue chain is tRNA pseudouridine synthase A (255 aa).

Aspartate 52 functions as the Nucleophile in the catalytic mechanism. Tyrosine 111 contributes to the substrate binding site.

It belongs to the tRNA pseudouridine synthase TruA family. As to quaternary structure, homodimer.

The enzyme catalyses uridine(38/39/40) in tRNA = pseudouridine(38/39/40) in tRNA. In terms of biological role, formation of pseudouridine at positions 38, 39 and 40 in the anticodon stem and loop of transfer RNAs. The protein is tRNA pseudouridine synthase A of Cereibacter sphaeroides (strain ATCC 17023 / DSM 158 / JCM 6121 / CCUG 31486 / LMG 2827 / NBRC 12203 / NCIMB 8253 / ATH 2.4.1.) (Rhodobacter sphaeroides).